We begin with the raw amino-acid sequence, 261 residues long: Arcelin-5B (261 aa).

Positions 1–21 (MASSKLLSLALFLVLLTHANS) are cleaved as a signal peptide. N-linked (GlcNAc...) asparagine glycosylation is found at Asn-91 and Asn-100. Cys-167 and Cys-203 form a disulfide bridge.

This sequence belongs to the leguminous lectin family. As to quaternary structure, monomer.

Seed storage. This carbohydrate-binding lectin has toxic effects on bean bruchid pests. The protein is Arcelin-5B (ARC5B) of Phaseolus vulgaris (Kidney bean).